A 520-amino-acid chain; its full sequence is MSASRTVICLLRNDLRLHDNEVFHWAQRNAEHIIPLYCFDPRHYQGTYHYNFPKTGPFRLRFLLDSVKDLRALLKKHGSTLLVRQGKPEDVVCELIKQLGSVSTVAFHEEVASEEKSVEEKLKEICCQNKVRVQTFWGSTLYHRDDLPFSHIGGLPDVYTQFRKAVEAQGRVRPVLSTPEQVKSPPSGLEEGPIPTFDSLGQTEPLDDCRSAFPCRGGETEALARLKHYFWDTNAVATYKETRNGMIGVDFSTKFSPWLALGCISPRYIYEQIKKYEVERTANQSTYWVIFELLWRDYFKFVALKYGNRIFYMNGLQDKHVPWNTDMKMFDAWKEGRTGVPFVDANMRELALTGFMSNRGRQNVASFLTKDLGLDWRLGAEWFEYLLVDHDVCSNYGNWLYSAGIGNDPRENRKFNMIKQGLDYDNNGDYVRQWVPELRGIKGGDVHTPWTLSNSALSHAQVSLNQTYPCPIITAPEWSRHVNNKSSGPSSSKGRKGSSYTARQHKDRGIDFYFSKNKHF.

A Photolyase/cryptochrome alpha/beta domain is found at 5–141 (RTVICLLRND…RVQTFWGSTL (137 aa)). The disordered stretch occupies residues 479–504 (SRHVNNKSSGPSSSKGRKGSSYTARQ).

Belongs to the DNA photolyase class-1 family. The cofactor is FAD. Requires (6R)-5,10-methylene-5,6,7,8-tetrahydrofolate as cofactor.

Its function is as follows. May have a photoreceptor function. Has weak cyclobutyl pyrimidine photolyase activity when expressed in E.coli and when tested in vitro. This Danio rerio (Zebrafish) protein is Cryptochrome DASH (cry-dash).